The chain runs to 311 residues: Methionyl-tRNA formyltransferase (311 aa).

109 to 112 (SLLP) is a (6S)-5,6,7,8-tetrahydrofolate binding site.

The protein belongs to the Fmt family.

It catalyses the reaction L-methionyl-tRNA(fMet) + (6R)-10-formyltetrahydrofolate = N-formyl-L-methionyl-tRNA(fMet) + (6S)-5,6,7,8-tetrahydrofolate + H(+). Attaches a formyl group to the free amino group of methionyl-tRNA(fMet). The formyl group appears to play a dual role in the initiator identity of N-formylmethionyl-tRNA by promoting its recognition by IF2 and preventing the misappropriation of this tRNA by the elongation apparatus. The chain is Methionyl-tRNA formyltransferase from Staphylococcus aureus (strain bovine RF122 / ET3-1).